A 264-amino-acid chain; its full sequence is Apolipoprotein A-I (264 aa).

A signal peptide spans 1–18 (MKAVVLAVAVLFLTGSQA). Repeat copies occupy residues 67-88 (LNLLENWDTFGSTFGRLQEQLG) and 89-110 (PVTREFWDSLEKDTDWLRQEMN). The tract at residues 67–264 (LNLLENWDTF…DEATQKLNTQ (198 aa)) is 10 X approximate tandem repeats. Methionine 109 is modified (methionine sulfoxide). Residues 111–121 (KDLEEVKQKVQ) form a 3; half-length repeat. 3 consecutive repeat copies span residues 122-143 (PYLDEFQKKWEEEVERYRPKVE), 144-165 (PLGAQLREGARQKLEELQKQLV), and 166-187 (PLGEDLRDRARLHVDALRTKLA). One copy of the 7; truncated repeat lies at 188 to 207 (PYSDQMRDRLAERLTALRDN). Methionine 193 is subject to Methionine sulfoxide. Residues 208-229 (PKLAEYHARATEHLKKLGEKTK) form repeat 8. The 9; half-length repeat unit spans residues 230–240 (PTLEDLRQGLM). A Methionine sulfoxide modification is found at methionine 240. Copy 10 of the repeat occupies 241–264 (PWLESLKAKALSVLDEATQKLNTQ).

Belongs to the apolipoprotein A1/A4/E family. As to quaternary structure, homodimer. Interacts with APOA1BP and CLU. Component of a sperm activating protein complex (SPAP), consisting of APOA1, an immunoglobulin heavy chain, an immunoglobulin light chain and albumin. Interacts with NDRG1. Interacts with SCGB3A2. Interacts with NAXE and YJEFN3. Glycosylated. In terms of processing, palmitoylated. Post-translationally, phosphorylation sites are present in the extracellular medium.

It localises to the secreted. Its function is as follows. Participates in the reverse transport of cholesterol from tissues to the liver for excretion by promoting cholesterol efflux from tissues and by acting as a cofactor for the lecithin cholesterol acyltransferase (LCAT). As part of the SPAP complex, activates spermatozoa motility. This chain is Apolipoprotein A-I (Apoa1), found in Nannospalax galili (Northern Israeli blind subterranean mole rat).